The chain runs to 64 residues: Large ribosomal subunit protein bL35 (64 aa).

2 stretches are compositionally biased toward basic residues: residues 1–15 (MPKQ…KRFR) and 23–43 (VRQK…RTRR). A disordered region spans residues 1–64 (MPKQKSHSGA…AGRIKRLLAR (64 aa)).

The protein belongs to the bacterial ribosomal protein bL35 family.

This is Large ribosomal subunit protein bL35 from Frankia alni (strain DSM 45986 / CECT 9034 / ACN14a).